Consider the following 379-residue polypeptide: Dual-specificity RNA methyltransferase RlmN (379 aa).

E95 serves as the catalytic Proton acceptor. One can recognise a Radical SAM core domain in the interval E101–D345. An intrachain disulfide couples C108 to C350. Residues C115, C119, and C122 each coordinate [4Fe-4S] cluster. S-adenosyl-L-methionine contacts are provided by residues G176–E177, S208, S230–H232, and N307. The S-methylcysteine intermediate role is filled by C350.

The protein belongs to the radical SAM superfamily. RlmN family. [4Fe-4S] cluster serves as cofactor.

The protein localises to the cytoplasm. The enzyme catalyses adenosine(2503) in 23S rRNA + 2 reduced [2Fe-2S]-[ferredoxin] + 2 S-adenosyl-L-methionine = 2-methyladenosine(2503) in 23S rRNA + 5'-deoxyadenosine + L-methionine + 2 oxidized [2Fe-2S]-[ferredoxin] + S-adenosyl-L-homocysteine. It catalyses the reaction adenosine(37) in tRNA + 2 reduced [2Fe-2S]-[ferredoxin] + 2 S-adenosyl-L-methionine = 2-methyladenosine(37) in tRNA + 5'-deoxyadenosine + L-methionine + 2 oxidized [2Fe-2S]-[ferredoxin] + S-adenosyl-L-homocysteine. Specifically methylates position 2 of adenine 2503 in 23S rRNA and position 2 of adenine 37 in tRNAs. m2A2503 modification seems to play a crucial role in the proofreading step occurring at the peptidyl transferase center and thus would serve to optimize ribosomal fidelity. In Burkholderia vietnamiensis (strain G4 / LMG 22486) (Burkholderia cepacia (strain R1808)), this protein is Dual-specificity RNA methyltransferase RlmN.